Here is a 176-residue protein sequence, read N- to C-terminus: Putative metal-dependent hydrolase BLi00869/BLi00870/BL03027 (176 aa).

Zn(2+) contacts are provided by His-65, His-158, and His-162.

This sequence belongs to the metal hydrolase YfiT family. In terms of assembly, homodimer. Requires Zn(2+) as cofactor.

The protein localises to the cytoplasm. Its function is as follows. Possible metal-dependent hydrolase. This chain is Putative metal-dependent hydrolase BLi00869/BLi00870/BL03027, found in Bacillus licheniformis (strain ATCC 14580 / DSM 13 / JCM 2505 / CCUG 7422 / NBRC 12200 / NCIMB 9375 / NCTC 10341 / NRRL NRS-1264 / Gibson 46).